We begin with the raw amino-acid sequence, 284 residues long: Tropomyosin alpha-3 chain (284 aa).

Met-1 is subject to N-acetylmethionine. The tract at residues Met-1–Glu-40 is disordered. The stretch at Met-1–Ile-284 forms a coiled coil. Over residues Lys-12 to Glu-40 the composition is skewed to basic and acidic residues. The residue at position 53 (Thr-53) is a Phosphothreonine. Phosphoserine occurs at positions 61 and 87. 2 positions are modified to phosphothreonine: Thr-108 and Thr-252. Position 261 is a phosphotyrosine (Tyr-261). Ser-271 carries the post-translational modification Phosphoserine. Position 282 is a phosphothreonine (Thr-282). Ser-283 bears the Phosphoserine mark.

Belongs to the tropomyosin family. Homodimer. Heterodimer of an alpha (TPM1, TPM3 or TPM4) and a beta (TPM2) chain. Interacts with TMOD1. Interacts with TNNT1.

It localises to the cytoplasm. It is found in the cytoskeleton. In terms of biological role, binds to actin filaments in muscle and non-muscle cells. Plays a central role, in association with the troponin complex, in the calcium dependent regulation of vertebrate striated muscle contraction. Smooth muscle contraction is regulated by interaction with caldesmon. In non-muscle cells is implicated in stabilizing cytoskeleton actin filaments. This is Tropomyosin alpha-3 chain (TPM3) from Sus scrofa (Pig).